The primary structure comprises 404 residues: NADH-quinone oxidoreductase subunit D 2 (404 aa).

Belongs to the complex I 49 kDa subunit family. In terms of assembly, NDH-1 is composed of 14 different subunits. Subunits NuoB, C, D, E, F, and G constitute the peripheral sector of the complex.

Its subcellular location is the cell inner membrane. It catalyses the reaction a quinone + NADH + 5 H(+)(in) = a quinol + NAD(+) + 4 H(+)(out). NDH-1 shuttles electrons from NADH, via FMN and iron-sulfur (Fe-S) centers, to quinones in the respiratory chain. The immediate electron acceptor for the enzyme in this species is believed to be ubiquinone. Couples the redox reaction to proton translocation (for every two electrons transferred, four hydrogen ions are translocated across the cytoplasmic membrane), and thus conserves the redox energy in a proton gradient. This chain is NADH-quinone oxidoreductase subunit D 2, found in Rhizobium etli (strain CIAT 652).